The following is a 179-amino-acid chain: Cell division protein SepF (179 aa).

Positions 18–55 (EDSSLPYEKRDEPVFTPVNSSQEPALPMNQPSQSAGTK) are disordered. Residues 34 to 55 (PVNSSQEPALPMNQPSQSAGTK) are compositionally biased toward polar residues.

Belongs to the SepF family. Homodimer. Interacts with FtsZ.

The protein localises to the cytoplasm. In terms of biological role, cell division protein that is part of the divisome complex and is recruited early to the Z-ring. Probably stimulates Z-ring formation, perhaps through the cross-linking of FtsZ protofilaments. Its function overlaps with FtsA. This chain is Cell division protein SepF, found in Streptococcus pneumoniae (strain ATCC 700669 / Spain 23F-1).